A 127-amino-acid chain; its full sequence is MNQTVKAKKKKKTITLGVVHIRASFNNTIVTFTDVQGNAISSASAGANGFKGAKKATPYAAQITIDKAAEKAKEYGLKTISIRIGGPGAQRESAMRALFGQNFVVTSILDVSSIAHNGVKAPKRRRV.

It belongs to the universal ribosomal protein uS11 family. In terms of assembly, part of the 30S ribosomal subunit. Interacts with proteins S7 and S18. Binds to IF-3.

In terms of biological role, located on the platform of the 30S subunit, it bridges several disparate RNA helices of the 16S rRNA. Forms part of the Shine-Dalgarno cleft in the 70S ribosome. The protein is Small ribosomal subunit protein uS11 of Rickettsia bellii (strain RML369-C).